We begin with the raw amino-acid sequence, 80 residues long: NAD(P)H-quinone oxidoreductase subunit O (80 aa).

Belongs to the complex I NdhO subunit family. In terms of assembly, NDH-1 can be composed of about 15 different subunits; different subcomplexes with different compositions have been identified which probably have different functions.

It is found in the cellular thylakoid membrane. The catalysed reaction is a plastoquinone + NADH + (n+1) H(+)(in) = a plastoquinol + NAD(+) + n H(+)(out). The enzyme catalyses a plastoquinone + NADPH + (n+1) H(+)(in) = a plastoquinol + NADP(+) + n H(+)(out). Functionally, NDH-1 shuttles electrons from an unknown electron donor, via FMN and iron-sulfur (Fe-S) centers, to quinones in the respiratory and/or the photosynthetic chain. The immediate electron acceptor for the enzyme in this species is believed to be plastoquinone. Couples the redox reaction to proton translocation, and thus conserves the redox energy in a proton gradient. Cyanobacterial NDH-1 also plays a role in inorganic carbon-concentration. This is NAD(P)H-quinone oxidoreductase subunit O from Prochlorococcus marinus (strain MIT 9515).